The primary structure comprises 230 residues: Endonuclease NucS (230 aa).

This sequence belongs to the NucS endonuclease family.

The protein resides in the cytoplasm. Functionally, cleaves both 3' and 5' ssDNA extremities of branched DNA structures. This is Endonuclease NucS from Corynebacterium glutamicum (strain R).